Reading from the N-terminus, the 2472-residue chain is Telomere-associated protein RIF1 (2472 aa).

The disordered stretch occupies residues 1-25 (MTARGQSPLAPLLETLEDPSASHGG). Phosphoserine is present on serine 402. Threonine 409 is subject to Phosphothreonine. Phosphoserine is present on residues serine 782, serine 979, and serine 1008. Threonine 1047 is subject to Phosphothreonine. Residues 1145 to 1192 (LEKSSLSNNECGSLDKTSPEMSNSNNDERKKALISSRKTSTECASSTE) form a disordered region. Residues 1148-1169 (SSLSNNECGSLDKTSPEMSNSN) are compositionally biased toward polar residues. Position 1162 is a phosphoserine (serine 1162). Phosphothreonine is present on threonine 1220. Serine 1236 and serine 1238 each carry phosphoserine. Composition is skewed to basic and acidic residues over residues 1265-1279 (AKQR…DSEK) and 1306-1315 (MRSEPEKNTE). Disordered regions lie at residues 1265–1318 (AKQR…EESV), 1398–1464 (MVNE…DVLP), and 1479–1587 (IEKG…DQEE). A compositionally biased stretch (polar residues) spans 1400–1412 (NEDSQVQITPNQK). 3 positions are modified to phosphoserine: serine 1422, serine 1454, and serine 1513. Basic and acidic residues-rich tracts occupy residues 1431–1464 (SQDK…DVLP) and 1500–1530 (EQNK…EKLV). Phosphothreonine is present on threonine 1518. Phosphoserine occurs at positions 1542, 1552, 1554, 1556, and 1564. Residues 1565–1574 (RKKRSGKWKN) are compositionally biased toward basic residues. A phosphoserine mark is found at serine 1576, serine 1579, serine 1613, serine 1616, serine 1688, serine 1693, serine 1706, and serine 1709. Residues 1762–1782 (TKKADVQAPVSPSETSQANPY) form a disordered region. Polar residues predominate over residues 1771 to 1782 (VSPSETSQANPY). At threonine 1806 the chain carries Phosphothreonine. Position 1810 is a phosphoserine (serine 1810). The segment covering 1846–1859 (AMSLESQESPNENF) has biased composition (polar residues). Residues 1846-1889 (AMSLESQESPNENFKTVGPCLGDSKNVSQESLETKEEKPEETPK) form a disordered region. A phosphoserine mark is found at serine 1873 and serine 1876. Basic and acidic residues predominate over residues 1877-1889 (LETKEEKPEETPK). Positions 1924–2472 (EASFHGQERT…WRSPSHENSI (549 aa)) are interaction with condensed chromosomes in telophase. 2 positions are modified to phosphoserine: serine 1926 and serine 1971. Residues 1992–2021 (EQTAAGELDGGNDVSDLHSSEETNTKMKNN) form a disordered region. Basic and acidic residues predominate over residues 2006–2021 (SDLHSSEETNTKMKNN). Phosphoserine is present on residues serine 2144 and serine 2161. The residue at position 2167 (threonine 2167) is a Phosphothreonine. The segment at 2170-2446 (VWSPLASPST…SGSQLFEMHE (277 aa)) is interaction with ERCC6. Phosphoserine is present on residues serine 2172, serine 2176, serine 2195, serine 2196, and serine 2205. Residues 2227-2255 (RSHSSNSSPIGKSVKTSPTTQSKHNTTSA) show a composition bias toward polar residues. A disordered region spans residues 2227-2269 (RSHSSNSSPIGKSVKTSPTTQSKHNTTSAKGFLSPGSRSPKFK). Phosphoserine occurs at positions 2260, 2339, 2391, 2393, 2465, and 2471.

Belongs to the RIF1 family. As to quaternary structure, interacts with TP53BP1 (when phosphorylated by ATM). May interact with TRF2. Interacts with SHLD2. Interacts with ERCC6 (via WHD region). Interacts with ASTE1. As to expression, highly expressed in testis.

The protein resides in the nucleus. The protein localises to the chromosome. Its subcellular location is the telomere. It is found in the cytoplasm. It localises to the cytoskeleton. The protein resides in the spindle. Its function is as follows. Key regulator of TP53BP1 that plays a key role in the repair of double-strand DNA breaks (DSBs) in response to DNA damage: acts by promoting non-homologous end joining (NHEJ)-mediated repair of DSBs. In response to DNA damage, interacts with ATM-phosphorylated TP53BP1. Interaction with TP53BP1 leads to dissociate the interaction between NUDT16L1/TIRR and TP53BP1, thereby unmasking the tandem Tudor-like domain of TP53BP1 and allowing recruitment to DNA DSBs. Once recruited to DSBs, RIF1 and TP53BP1 act by promoting NHEJ-mediated repair of DSBs. In the same time, RIF1 and TP53BP1 specifically counteract the function of BRCA1 by blocking DSBs resection via homologous recombination (HR) during G1 phase. Also required for immunoglobulin class-switch recombination (CSR) during antibody genesis, a process that involves the generation of DNA DSBs. Promotes NHEJ of dysfunctional telomeres. This chain is Telomere-associated protein RIF1, found in Homo sapiens (Human).